We begin with the raw amino-acid sequence, 275 residues long: Large ribosomal subunit protein uL2c (275 aa).

A disordered region spans residues 225–249 (PVDHPHGGGEGRAPIGRKKPTTPWG).

This sequence belongs to the universal ribosomal protein uL2 family. In terms of assembly, part of the 50S ribosomal subunit.

It is found in the plastid. The protein is Large ribosomal subunit protein uL2c (rpl2) of Cuscuta reflexa (Southern Asian dodder).